Here is a 297-residue protein sequence, read N- to C-terminus: N-acetylneuraminate lyase (297 aa).

2 residues coordinate aceneuramate: S47 and T48. The Proton donor role is filled by Y137. The Schiff-base intermediate with substrate role is filled by K165. The aceneuramate site is built by T167, G189, D191, E192, and S208.

The protein belongs to the DapA family. NanA subfamily. In terms of assembly, homotetramer.

Its subcellular location is the cytoplasm. It catalyses the reaction aceneuramate = aldehydo-N-acetyl-D-mannosamine + pyruvate. It functions in the pathway amino-sugar metabolism; N-acetylneuraminate degradation; D-fructose 6-phosphate from N-acetylneuraminate: step 1/5. Functionally, catalyzes the reversible aldol cleavage of N-acetylneuraminic acid (sialic acid; Neu5Ac) to form pyruvate and N-acetylmannosamine (ManNAc) via a Schiff base intermediate. This is N-acetylneuraminate lyase from Escherichia coli (strain SE11).